We begin with the raw amino-acid sequence, 421 residues long: MKLTKLVALAGAALASPIQLVPREGSFLGFNYGSEKVHGVNLGGWFVLEPFITPSLFEAFGNNDANVPVDEYHYTAWLGKEEAEKRLTDHWNTWITEYDIKAIAENYKLNLVRIPIGYWAFSLLPNDPYVQGQEAYLDRALGWCRKYGVKAWVDVHGVPGSQNGFDNSGLRDHWDWPNADNVQHSINVINYIAGKYGAPEYNDIVVGIELVNEPLGPAIGMEVIEKYFQEGFWTVRHAGSDTAVVIHDAFQEKNYFNNFMTTEQGFWNVVLDHHQYQVFSPGELARNIDQHIAEVCNVGRQASTEYHWRIFGEWSAALTDCTHWLNGVGKGPRLDGSFPGSYYQRSCQGRGDIQTWSEQDKQESRRYVEAQLDAWEHGGDGWIYWTYKTENALEWDFRRLVDNGIFPFPYWDRQFPNQCGF.

The N-terminal stretch at 1-15 is a signal peptide; it reads MKLTKLVALAGAALA. The Proton donor role is filled by Glu213. 2 cysteine pairs are disulfide-bonded: Cys296–Cys419 and Cys321–Cys347. Glu313 serves as the catalytic Nucleophile.

The protein belongs to the glycosyl hydrolase 5 (cellulase A) family.

The protein resides in the secreted. The catalysed reaction is Successive hydrolysis of beta-D-glucose units from the non-reducing ends of (1-&gt;3)-beta-D-glucans, releasing alpha-glucose.. This chain is Glucan 1,3-beta-glucosidase (EXG1), found in Yarrowia lipolytica (strain CLIB 122 / E 150) (Yeast).